An 82-amino-acid polypeptide reads, in one-letter code: Omega-ctenitoxin-Pn1a (82 aa).

The signal sequence occupies residues 1 to 21 (MWLKIQVFLLAITLITLGIQA). A propeptide spanning residues 22–37 (EPNSSPNNPLIEEEAR) is cleaved from the precursor. Cystine bridges form between C39/C54, C46/C59, C53/C70, and C61/C68. Positions 72–82 (KKFIEFFGGGK) are excised as a propeptide.

Belongs to the neurotoxin 02 (plectoxin) family. Expressed by the venom gland.

It is found in the secreted. Its function is as follows. Antagonist of L-type calcium channels (Cav1/CACNA1). Induces immediate clockwise gyration and flaccid paralysis after 6 hours at dose levels of 5 ug per mouse. This is Omega-ctenitoxin-Pn1a from Phoneutria nigriventer (Brazilian armed spider).